Consider the following 336-residue polypeptide: Probable assembly chaperone of rpl4 (336 aa).

TPR repeat units follow at residues 39-72 (GRAF…SKNL), 75-108 (DQGY…LERL), 110-143 (IDKG…QPDA), and 162-195 (AEAL…ISRA). The tract at residues 316–336 (DEENEEAEWETSENEEEMDED) is disordered.

This sequence belongs to the ACL4 family.

The protein localises to the cytoplasm. It is found in the nucleus. Its subcellular location is the nucleolus. Acts as a chaperone for the L4 ribosomal subunit encoded by rpl4A and rpl4B, required for hierarchical ribosome assembly. Shields ribosomal protein L4 until timely release and insertion into the pre-ribosome is possible, once ribosomal protein L18 is present. The polypeptide is Probable assembly chaperone of rpl4 (Schizosaccharomyces pombe (strain 972 / ATCC 24843) (Fission yeast)).